The primary structure comprises 1449 residues: MAFNQMRSSGSTTDLNRLNSSSISGGGNINISNGGYGNQQLNAILSPIKSSSLSSMSNSSSYSNLNTLSSSKSFNSLTLIENQNDTTTTTSTNNGAISEQYQQLLSMIPKYQTKQYESDVKILFERNTPEQMKQMEFKKRSEIEDMKSQLRNLIGNKYRDLVEGSDAIVKMKKSTELISDNLSLMQSELKQFSEKRNHFRKGVSQDNLKLNKEKEIQKKISIFSKYCKFLIDIPEVIWRSLDSNDYFEVCVFFLKSKYLYSKITNENNLEIKRLLSKLTIIEKQWISMKQFPIKTIGYSKLFLNESTSRIIGTPIEKYIGSLSTLILFEKKSIKETFNEFLLSRRSVLFNSILSKDTNRPIQQTIEKMFQFLKMSIYYIMVLFYPRKYQTNNNNNNDQPEEEEQDDEKLISNDYQSKISKFKSNLQQYTSSLSSMSSTTTTTNSPTFESKMINKPVSEKELNQLPTLNFTSSILESTFNWRSPYLKECLKFYKDVSNGELSINSSGSQQGDDYQDINTNNNNSNNNNSGIDSQDIEYSLIEFDNFNSNFIFKRTSEWIEEIIEDFKLNLVQKFLIDIKSAKELSSLRSEIFDFILDFKNIVPFIQPPQTNSLSSSNSSINSIASPSVSLTSSTSSPIIATTKATVLTTPTPTPTPTPTTPISWNRMFSIICGKDMKYFLNIFEDIFLVKSESIIMDSFSRINLSKIQSDIFSQIKSEDKNFSEFLWFYNQDDPIQSIKNKTNGITPSNELFLTKINQLYNNIKSDFIYLLNDNNINNININNNNNNNNNNNNNNNNNRSMIITSQPKNLIKINEILIKEYMKKSFYKSLNEFTTSTQDRIDQLILLNKNKTTSGTTTSTNLKKDEILFISKLSKIFYKHIVNNPNLYFLNSLNIFDTTNISNCSTSFSKSNSINILDTISSPPQPPPSPTHSSPSIQRHTNNNNNNNNNNNNTSPIINNNNNNSEILKESLPIIDKLKQQFYYGCIVWVNEFVGDYSQILKQDLFNHDWNDSDRIKTWEKHIIQIESNGHNHNNDANDGGGDDDATVNGVNEHSTIIYIPYQTSPFITSYLMSISLEISKFSLNTIDKNILRFIIESITLNLFNIVNDLLSTSSTSTTASTSNLTSNNTTTTIKFNKEGYIQLLIDLKYIGFILFGRELNSSSSKKPTSQPTSNVIIKDSIFKKAKSHYQSIISTKNNVDENIELQKQQQQQQQQQQQQQQQQQQQQQQQQQQQQQQQEQLSNNIVYTFNQIIELVEKNLDPIDLAFYNSYIVKFIDQTYSKTLTLFGNFVYLHKSIVKPEKKQSINGGQQSPPLATTSSNGISGGKGIQQQQQQQSDLPNPMQLLKTNTKFQLFSIDTIQTITDAIATAPTTIPSSTSNSIQSSANNSAIASPISTIDYRNQQQQQQNNTNQQSLPSILSPTSASSTINTFSFMGKKISDLMYNTTKK.

Disordered stretches follow at residues 503-529, 916-960, 1303-1338, and 1401-1422; these read NSSG…NNSG, LDTI…INNN, KQSI…QQSD, and RNQQ…ILSP. Composition is skewed to low complexity over residues 517–528 and 930–960; these read NTNNNNSNNNNS and THSS…INNN. Polar residues predominate over residues 1305 to 1322; the sequence is SINGGQQSPPLATTSSNG. The span at 1401–1414 shows a compositional bias: low complexity; that stretch reads RNQQQQQQNNTNQQ.

Belongs to the COG1 family. As to quaternary structure, component of the conserved oligomeric Golgi complex which is composed of eight different subunits and is required for normal Golgi morphology and localization.

It is found in the golgi apparatus membrane. Its function is as follows. Required for normal Golgi function. The sequence is that of Conserved oligomeric Golgi complex subunit 1 (cog1) from Dictyostelium discoideum (Social amoeba).